A 275-amino-acid polypeptide reads, in one-letter code: Beta-lactamase OXA-15 (275 aa).

A signal peptide spans 1-21 (MAIRIFAILFSIFSLATFAHA). Residue Ser-72 is the Acyl-ester intermediate of the active site. Lys-75 bears the N6-carboxylysine mark. 210–212 (KTG) is a binding site for substrate.

The protein belongs to the class-D beta-lactamase family.

It carries out the reaction a beta-lactam + H2O = a substituted beta-amino acid. Its function is as follows. Hydrolyzes oxacillin, first-generation cephalosporins and ceftazidime. Does not hydrolyze cefotaxime or carbapenems. In Pseudomonas aeruginosa, this protein is Beta-lactamase OXA-15 (bla).